The sequence spans 217 residues: Small ribosomal subunit protein eS6 (217 aa).

This sequence belongs to the eukaryotic ribosomal protein eS6 family.

The polypeptide is Small ribosomal subunit protein eS6 (Hyperthermus butylicus (strain DSM 5456 / JCM 9403 / PLM1-5)).